The sequence spans 503 residues: ATP synthase subunit beta (503 aa).

Residue 157-164 (GGAGVGKT) coordinates ATP.

The protein belongs to the ATPase alpha/beta chains family. F-type ATPases have 2 components, CF(1) - the catalytic core - and CF(0) - the membrane proton channel. CF(1) has five subunits: alpha(3), beta(3), gamma(1), delta(1), epsilon(1). CF(0) has three main subunits: a(1), b(2) and c(9-12). The alpha and beta chains form an alternating ring which encloses part of the gamma chain. CF(1) is attached to CF(0) by a central stalk formed by the gamma and epsilon chains, while a peripheral stalk is formed by the delta and b chains.

The protein resides in the cell inner membrane. The enzyme catalyses ATP + H2O + 4 H(+)(in) = ADP + phosphate + 5 H(+)(out). Functionally, produces ATP from ADP in the presence of a proton gradient across the membrane. The catalytic sites are hosted primarily by the beta subunits. The protein is ATP synthase subunit beta of Flavobacterium johnsoniae (strain ATCC 17061 / DSM 2064 / JCM 8514 / BCRC 14874 / CCUG 350202 / NBRC 14942 / NCIMB 11054 / UW101) (Cytophaga johnsonae).